An 853-amino-acid chain; its full sequence is Leucine--tRNA ligase (853 aa).

Positions 42–52 match the 'HIGH' region motif; sequence PYPSGNLHMGH. The short motif at 615–619 is the 'KMSKS' region element; the sequence is KMSKS. K618 serves as a coordination point for ATP.

This sequence belongs to the class-I aminoacyl-tRNA synthetase family.

Its subcellular location is the cytoplasm. It catalyses the reaction tRNA(Leu) + L-leucine + ATP = L-leucyl-tRNA(Leu) + AMP + diphosphate. This is Leucine--tRNA ligase from Crocosphaera subtropica (strain ATCC 51142 / BH68) (Cyanothece sp. (strain ATCC 51142)).